A 392-amino-acid chain; its full sequence is Xylose operon regulatory protein (392 aa).

The HTH araC/xylS-type domain maps to 288 to 386; sequence IQAMHYIRNH…DTTPKEYRDV (99 aa). 2 consecutive DNA-binding regions (H-T-H motif) follow at residues 305–326 and 353–376; these read DQVL…KEEV and INEI…KKAY.

Its function is as follows. Regulatory protein for the xylBAFGHR operon. The protein is Xylose operon regulatory protein (xylR) of Escherichia coli O157:H7.